Consider the following 354-residue polypeptide: Homeobox protein Nkx-2.4 (354 aa).

The segment at residues 188-247 (RRKRRVLFSQAQVYELERRFKQQKYLSAPEREHLASMIHLTPTQVKIWFQNHRYKMKRQA) is a DNA-binding region (homeobox). The interval 245 to 329 (RQAKDKAAQQ…PALHGPGGGL (85 aa)) is disordered. A compositionally biased stretch (pro residues) spans 262–272 (GPPPPPPPPSP). Over residues 290–304 (GAGTPTPGQGGQQPQ) the composition is skewed to low complexity.

The protein belongs to the NK-2 homeobox family. In terms of tissue distribution, in the embryo it is detected in the posterior hypothalamus and later in the head. In the adult it is detected only in testis.

Its subcellular location is the nucleus. Its function is as follows. Probable transcription factor. This is Homeobox protein Nkx-2.4 (Nkx2-4) from Mus musculus (Mouse).